Consider the following 354-residue polypeptide: Replication factor C subunit 3 (354 aa).

An ATP-binding site is contributed by 41-48 (GPSGSGKK).

This sequence belongs to the activator 1 small subunits family. Heterotetramer of subunits RFC2, RFC3, RFC4 and RFC5 that can form a complex with RFC1.

The protein resides in the nucleus. Its function is as follows. May be involved in DNA replication and thus regulate cell proliferation. This Arabidopsis thaliana (Mouse-ear cress) protein is Replication factor C subunit 3 (RFC3).